A 426-amino-acid chain; its full sequence is DNA primase DnaG (426 aa).

The Toprim domain maps to 165-241 (DEIIIVEGRA…DIDYVAKAPP (77 aa)). Mg(2+) contacts are provided by E171, D215, and D217. The disordered stretch occupies residues 278-298 (PAVEERPQPPQPQPPAVQPVQ). Residues 285–294 (QPPQPQPPAV) show a composition bias toward pro residues.

Belongs to the archaeal DnaG primase family. Forms a ternary complex with MCM helicase and DNA. Component of the archaeal exosome complex. Requires Mg(2+) as cofactor.

The enzyme catalyses ssDNA + n NTP = ssDNA/pppN(pN)n-1 hybrid + (n-1) diphosphate.. Its function is as follows. RNA polymerase that catalyzes the synthesis of short RNA molecules used as primers for DNA polymerase during DNA replication. Also part of the exosome, which is a complex involved in RNA degradation. Acts as a poly(A)-binding protein that enhances the interaction between heteromeric, adenine-rich transcripts and the exosome. This Hyperthermus butylicus (strain DSM 5456 / JCM 9403 / PLM1-5) protein is DNA primase DnaG.